The primary structure comprises 87 residues: Phosphoribosyl-ATP pyrophosphatase (87 aa).

Belongs to the PRA-PH family.

Its subcellular location is the cytoplasm. It carries out the reaction 1-(5-phospho-beta-D-ribosyl)-ATP + H2O = 1-(5-phospho-beta-D-ribosyl)-5'-AMP + diphosphate + H(+). The protein operates within amino-acid biosynthesis; L-histidine biosynthesis; L-histidine from 5-phospho-alpha-D-ribose 1-diphosphate: step 2/9. The sequence is that of Phosphoribosyl-ATP pyrophosphatase from Nocardia farcinica (strain IFM 10152).